A 285-amino-acid chain; its full sequence is Phosphoribosylaminoimidazole-succinocarboxamide synthase (285 aa).

The protein belongs to the SAICAR synthetase family.

The catalysed reaction is 5-amino-1-(5-phospho-D-ribosyl)imidazole-4-carboxylate + L-aspartate + ATP = (2S)-2-[5-amino-1-(5-phospho-beta-D-ribosyl)imidazole-4-carboxamido]succinate + ADP + phosphate + 2 H(+). It functions in the pathway purine metabolism; IMP biosynthesis via de novo pathway; 5-amino-1-(5-phospho-D-ribosyl)imidazole-4-carboxamide from 5-amino-1-(5-phospho-D-ribosyl)imidazole-4-carboxylate: step 1/2. The polypeptide is Phosphoribosylaminoimidazole-succinocarboxamide synthase (Leptospira interrogans serogroup Icterohaemorrhagiae serovar copenhageni (strain Fiocruz L1-130)).